A 252-amino-acid chain; its full sequence is Cell division protein ZapD (252 aa).

It belongs to the ZapD family. In terms of assembly, interacts with FtsZ.

The protein resides in the cytoplasm. Cell division factor that enhances FtsZ-ring assembly. Directly interacts with FtsZ and promotes bundling of FtsZ protofilaments, with a reduction in FtsZ GTPase activity. The protein is Cell division protein ZapD of Chromobacterium violaceum (strain ATCC 12472 / DSM 30191 / JCM 1249 / CCUG 213 / NBRC 12614 / NCIMB 9131 / NCTC 9757 / MK).